The sequence spans 56 residues: Large ribosomal subunit protein bL33 (56 aa).

The protein belongs to the bacterial ribosomal protein bL33 family.

The protein is Large ribosomal subunit protein bL33 of Campylobacter hominis (strain ATCC BAA-381 / DSM 21671 / CCUG 45161 / LMG 19568 / NCTC 13146 / CH001A).